Here is a 453-residue protein sequence, read N- to C-terminus: 5-hydroxytryptamine receptor 1 (453 aa).

The Extracellular portion of the chain corresponds to 1–36 (MKSLKSSTHDVPHPEHVVWAPPAYDEQHHLFFSHGT). A helical transmembrane segment spans residues 37 to 57 (VLIGIVGSLIITVAVVGNVLV). The Cytoplasmic segment spans residues 58–74 (CLAIFTEPILSHSKSNF). Residues 75 to 94 (FIVSLAVADLLLALLVMTFA) traverse the membrane as a helical segment. Residues 95–110 (LVNDMYGYWLFGETFC) are Extracellular-facing. Cysteines 110 and 225 form a disulfide. The chain crosses the membrane as a helical span at residues 111–133 (FIWMSADVMCETASIFSICVISY). Over 134–153 (DRLKQVQKPLHYEEFMTTTR) the chain is Cytoplasmic. The helical transmembrane segment at 154-175 (ALLIIACLWICSFVLSFVPIFL) threads the bilayer. The Extracellular portion of the chain corresponds to 176 to 223 (EWHELSVEEIKAIFKDNKTEKEKALEAHNFSSALNQTLGDNQKSNAKH). The helical transmembrane segment at 224–244 (VCLFDVHFTYSVIYSFICFYV) threads the bilayer. Residues 245–301 (PCTLMLTNYLRLFLIAQTHQVRIRSLQMTNPPQLRGQGASSYRNQGTQGSKAARTLT) are Cytoplasmic-facing. Residues 302–322 (IITGTFLACWLPFFIINPIAA) traverse the membrane as a helical segment. The Extracellular portion of the chain corresponds to 323 to 331 (ADEHLIPLE). The helical transmembrane segment at 332-352 (CFMVTIWLGYFNSSVNPIIYG) threads the bilayer. Residues 353–453 (TSNSKFRAAF…VFDSDTAFSS (101 aa)) are Cytoplasmic-facing. Positions 397 to 428 (DLSSSEHPSDACDTGRGKNSKGGDCATADPTK) are disordered. Residues 403-412 (HPSDACDTGR) show a composition bias toward basic and acidic residues.

It belongs to the G-protein coupled receptor 1 family. Reproductive system.

Its subcellular location is the cell membrane. In terms of biological role, this is one of the several different receptors for 5-hydroxytryptamine (serotonin). 5-HT plays important roles in various behavioral and physiological processes in aplysia. These include feeding, locomotion, circadian rhythm, learning and memory, synaptic plasticity, and synaptic growth. This receptor is mediated by G proteins that stimulate phospholipase C. The chain is 5-hydroxytryptamine receptor 1 (5HTB1) from Aplysia californica (California sea hare).